The primary structure comprises 366 residues: Carbamoyl phosphate synthase small chain (366 aa).

Residues 1–172 form a CPSase region; the sequence is MYGILVLEDG…TYNAENEKTS (172 aa). Residues Ser45, Gly220, and Gly222 each contribute to the L-glutamine site. Positions 172–363 constitute a Glutamine amidotransferase type-1 domain; the sequence is SCVLIDCGVK…VELGIKFKAE (192 aa). Cys247 (nucleophile) is an active-site residue. Residues Leu248, Gln251, Asn289, Gly291, and Phe292 each contribute to the L-glutamine site. Active-site residues include His336 and Glu338.

It belongs to the CarA family. Composed of two chains; the small (or glutamine) chain promotes the hydrolysis of glutamine to ammonia, which is used by the large (or ammonia) chain to synthesize carbamoyl phosphate. Tetramer of heterodimers (alpha,beta)4.

It catalyses the reaction hydrogencarbonate + L-glutamine + 2 ATP + H2O = carbamoyl phosphate + L-glutamate + 2 ADP + phosphate + 2 H(+). The enzyme catalyses L-glutamine + H2O = L-glutamate + NH4(+). It functions in the pathway amino-acid biosynthesis; L-arginine biosynthesis; carbamoyl phosphate from bicarbonate: step 1/1. The protein operates within pyrimidine metabolism; UMP biosynthesis via de novo pathway; (S)-dihydroorotate from bicarbonate: step 1/3. Small subunit of the glutamine-dependent carbamoyl phosphate synthetase (CPSase). CPSase catalyzes the formation of carbamoyl phosphate from the ammonia moiety of glutamine, carbonate, and phosphate donated by ATP, constituting the first step of 2 biosynthetic pathways, one leading to arginine and/or urea and the other to pyrimidine nucleotides. The small subunit (glutamine amidotransferase) binds and cleaves glutamine to supply the large subunit with the substrate ammonia. The sequence is that of Carbamoyl phosphate synthase small chain from Methanococcus maripaludis (strain C7 / ATCC BAA-1331).